Consider the following 977-residue polypeptide: Probable RNA-dependent RNA polymerase 5 (977 aa).

Positions 103–122 are disordered; sequence EEMSVDSDAPSPKSLKSEDK.

This sequence belongs to the RdRP family.

It catalyses the reaction RNA(n) + a ribonucleoside 5'-triphosphate = RNA(n+1) + diphosphate. Its function is as follows. Probably involved in the RNA silencing pathway and required for the generation of small interfering RNAs (siRNAs). The sequence is that of Probable RNA-dependent RNA polymerase 5 (RDR5) from Arabidopsis thaliana (Mouse-ear cress).